The following is a 297-amino-acid chain: 4-hydroxy-tetrahydrodipicolinate synthase (297 aa).

Residue threonine 45 coordinates pyruvate. The active-site Proton donor/acceptor is the tyrosine 133. Catalysis depends on lysine 161, which acts as the Schiff-base intermediate with substrate. Isoleucine 205 is a pyruvate binding site.

Belongs to the DapA family. In terms of assembly, homotetramer; dimer of dimers.

The protein resides in the cytoplasm. It catalyses the reaction L-aspartate 4-semialdehyde + pyruvate = (2S,4S)-4-hydroxy-2,3,4,5-tetrahydrodipicolinate + H2O + H(+). It functions in the pathway amino-acid biosynthesis; L-lysine biosynthesis via DAP pathway; (S)-tetrahydrodipicolinate from L-aspartate: step 3/4. Catalyzes the condensation of (S)-aspartate-beta-semialdehyde [(S)-ASA] and pyruvate to 4-hydroxy-tetrahydrodipicolinate (HTPA). The protein is 4-hydroxy-tetrahydrodipicolinate synthase of Dichelobacter nodosus (strain VCS1703A).